Here is a 115-residue protein sequence, read N- to C-terminus: NADH-ubiquinone oxidoreductase chain 3 (115 aa).

Transmembrane regions (helical) follow at residues 3–23 (LLMA…IAFW), 55–75 (FFLV…LLPL), and 84–104 (LSAM…GLMY).

Belongs to the complex I subunit 3 family. In terms of assembly, core subunit of respiratory chain NADH dehydrogenase (Complex I) which is composed of 45 different subunits. Interacts with TMEM186. Interacts with TMEM242.

Its subcellular location is the mitochondrion inner membrane. It carries out the reaction a ubiquinone + NADH + 5 H(+)(in) = a ubiquinol + NAD(+) + 4 H(+)(out). Core subunit of the mitochondrial membrane respiratory chain NADH dehydrogenase (Complex I) which catalyzes electron transfer from NADH through the respiratory chain, using ubiquinone as an electron acceptor. Essential for the catalytic activity of complex I. The sequence is that of NADH-ubiquinone oxidoreductase chain 3 from Sigmodon ochrognathus (Yellow-nosed cotton rat).